The chain runs to 331 residues: Large ribosomal subunit protein uL3 (331 aa).

This sequence belongs to the universal ribosomal protein uL3 family. Part of the 50S ribosomal subunit. Forms a cluster with proteins L14 and L24e.

Its function is as follows. One of the primary rRNA binding proteins, it binds directly near the 3'-end of the 23S rRNA, where it nucleates assembly of the 50S subunit. The sequence is that of Large ribosomal subunit protein uL3 from Archaeoglobus fulgidus (strain ATCC 49558 / DSM 4304 / JCM 9628 / NBRC 100126 / VC-16).